Here is a 670-residue protein sequence, read N- to C-terminus: Probable leucine-rich repeat receptor-like protein kinase At1g68400 (670 aa).

The signal sequence occupies residues Met1–Ser29. Residues Thr30–Thr274 lie on the Extracellular side of the membrane. 5 N-linked (GlcNAc...) asparagine glycosylation sites follow: Asn52, Asn79, Asn102, Asn109, and Asn112. LRR repeat units lie at residues Arg69 to Thr91, Ser92 to Thr114, Ala115 to Leu137, Arg139 to Thr162, His163 to Asp185, and Leu186 to Phe207. Residues Asn149, Asn182, and Asn190 are each glycosylated (N-linked (GlcNAc...) asparagine). The interval Ser230 to Ser266 is disordered. The span at Val253–Ser266 shows a compositional bias: polar residues. Residue Asn268 is glycosylated (N-linked (GlcNAc...) asparagine). The chain crosses the membrane as a helical span at residues Ile275 to Leu295. Topologically, residues Tyr296–Gln670 are cytoplasmic. The region spanning Arg362–Ile636 is the Protein kinase domain. The residue at position 364 (Ser364) is a Phosphoserine. Residues Leu368–Ala376 and Lys390 each bind ATP. Ser443 carries the post-translational modification Phosphoserine. Thr463 carries the phosphothreonine modification. Asp491 serves as the catalytic Proton acceptor. A Phosphothreonine modification is found at Thr616.

It belongs to the protein kinase superfamily. Ser/Thr protein kinase family.

The protein resides in the cell membrane. The enzyme catalyses L-seryl-[protein] + ATP = O-phospho-L-seryl-[protein] + ADP + H(+). It catalyses the reaction L-threonyl-[protein] + ATP = O-phospho-L-threonyl-[protein] + ADP + H(+). In Arabidopsis thaliana (Mouse-ear cress), this protein is Probable leucine-rich repeat receptor-like protein kinase At1g68400.